A 442-amino-acid polypeptide reads, in one-letter code: tRNA modification GTPase MnmE (442 aa).

(6S)-5-formyl-5,6,7,8-tetrahydrofolate is bound by residues Arg-22, Glu-79, and Lys-119. The TrmE-type G domain maps to 216 to 366; that stretch reads GIKTCLVGAP…LLEKIKSIFA (151 aa). Residue Asn-226 participates in K(+) binding. GTP is bound by residues 226-231, 245-251, and 270-273; these read NSGKSS, SEIPGTT, and DTAG. Ser-230 contacts Mg(2+). 3 residues coordinate K(+): Ser-245, Ile-247, and Thr-250. Mg(2+) is bound at residue Thr-251. Lys-442 is a binding site for (6S)-5-formyl-5,6,7,8-tetrahydrofolate.

The protein belongs to the TRAFAC class TrmE-Era-EngA-EngB-Septin-like GTPase superfamily. TrmE GTPase family. In terms of assembly, homodimer. Heterotetramer of two MnmE and two MnmG subunits. K(+) is required as a cofactor.

Its subcellular location is the cytoplasm. In terms of biological role, exhibits a very high intrinsic GTPase hydrolysis rate. Involved in the addition of a carboxymethylaminomethyl (cmnm) group at the wobble position (U34) of certain tRNAs, forming tRNA-cmnm(5)s(2)U34. This is tRNA modification GTPase MnmE from Mesomycoplasma hyopneumoniae (strain J / ATCC 25934 / NCTC 10110) (Mycoplasma hyopneumoniae).